Here is a 194-residue protein sequence, read N- to C-terminus: Fe/S biogenesis protein NfuA (194 aa).

[4Fe-4S] cluster is bound by residues cysteine 152 and cysteine 155.

This sequence belongs to the NfuA family. Homodimer. It depends on [4Fe-4S] cluster as a cofactor.

Its function is as follows. Involved in iron-sulfur cluster biogenesis. Binds a 4Fe-4S cluster, can transfer this cluster to apoproteins, and thereby intervenes in the maturation of Fe/S proteins. Could also act as a scaffold/chaperone for damaged Fe/S proteins. The sequence is that of Fe/S biogenesis protein NfuA from Azotobacter vinelandii (strain DJ / ATCC BAA-1303).